A 65-amino-acid chain; its full sequence is Putative antitoxin MJECL31 (65 aa).

It belongs to the UPF0165 family.

In terms of biological role, possibly the antitoxin component of a type II toxin-antitoxin (TA) system. The chain is Putative antitoxin MJECL31 from Methanocaldococcus jannaschii (strain ATCC 43067 / DSM 2661 / JAL-1 / JCM 10045 / NBRC 100440) (Methanococcus jannaschii).